The chain runs to 226 residues: Deoxyribose-phosphate aldolase (226 aa).

Glutamate 96 (proton donor/acceptor) is an active-site residue. Catalysis depends on lysine 157, which acts as the Schiff-base intermediate with acetaldehyde. Lysine 185 functions as the Proton donor/acceptor in the catalytic mechanism.

It belongs to the DeoC/FbaB aldolase family. DeoC type 1 subfamily.

It is found in the cytoplasm. The catalysed reaction is 2-deoxy-D-ribose 5-phosphate = D-glyceraldehyde 3-phosphate + acetaldehyde. It participates in carbohydrate degradation; 2-deoxy-D-ribose 1-phosphate degradation; D-glyceraldehyde 3-phosphate and acetaldehyde from 2-deoxy-alpha-D-ribose 1-phosphate: step 2/2. In terms of biological role, catalyzes a reversible aldol reaction between acetaldehyde and D-glyceraldehyde 3-phosphate to generate 2-deoxy-D-ribose 5-phosphate. This is Deoxyribose-phosphate aldolase from Gloeobacter violaceus (strain ATCC 29082 / PCC 7421).